Reading from the N-terminus, the 230-residue chain is Flagellar L-ring protein (230 aa).

A signal peptide spans 1 to 15; the sequence is MSRLPSLSRLCLAIA. A lipid anchor (N-palmitoyl cysteine) is attached at Cys16. The S-diacylglycerol cysteine moiety is linked to residue Cys16.

This sequence belongs to the FlgH family. In terms of assembly, the basal body constitutes a major portion of the flagellar organelle and consists of four rings (L,P,S, and M) mounted on a central rod.

It localises to the cell outer membrane. The protein resides in the bacterial flagellum basal body. Functionally, assembles around the rod to form the L-ring and probably protects the motor/basal body from shearing forces during rotation. This Xanthomonas euvesicatoria pv. vesicatoria (strain 85-10) (Xanthomonas campestris pv. vesicatoria) protein is Flagellar L-ring protein.